We begin with the raw amino-acid sequence, 254 residues long: Large ribosomal subunit protein uL2 (254 aa).

The protein belongs to the universal ribosomal protein uL2 family.

This Eremothecium gossypii (strain ATCC 10895 / CBS 109.51 / FGSC 9923 / NRRL Y-1056) (Yeast) protein is Large ribosomal subunit protein uL2 (RPL2).